Reading from the N-terminus, the 525-residue chain is ALBINO3-like protein 2, chloroplastic (525 aa).

A run of 4 helical transmembrane segments spans residues 99–119 (WMII…LLIL), 167–187 (LWFF…MASI), 217–237 (FGPV…QISF), and 262–282 (ILSV…LVYW). 4 TPR repeats span residues 346-379 (PEEL…DPGY), 380-413 (VRGL…LLDE), 425-458 (MLAS…REPG), and 467-500 (FEAL…NPAY).

The protein belongs to the OXA1/ALB3/YidC (TC 2.A.9.2) family.

The protein resides in the plastid. It is found in the chloroplast thylakoid membrane. Its function is as follows. Probably required for the insertion of integral membrane proteins into the chloroplast thylakoid membranes. This Arabidopsis thaliana (Mouse-ear cress) protein is ALBINO3-like protein 2, chloroplastic (ALB3L2).